The sequence spans 388 residues: Lipid-A-disaccharide synthase (388 aa).

Belongs to the LpxB family.

It carries out the reaction a lipid X + a UDP-2-N,3-O-bis[(3R)-3-hydroxyacyl]-alpha-D-glucosamine = a lipid A disaccharide + UDP + H(+). It participates in bacterial outer membrane biogenesis; LPS lipid A biosynthesis. In terms of biological role, condensation of UDP-2,3-diacylglucosamine and 2,3-diacylglucosamine-1-phosphate to form lipid A disaccharide, a precursor of lipid A, a phosphorylated glycolipid that anchors the lipopolysaccharide to the outer membrane of the cell. The protein is Lipid-A-disaccharide synthase of Burkholderia pseudomallei (strain K96243).